The chain runs to 506 residues: Hippocampus abundant transcript-like protein 1 (506 aa).

Residues 1 to 25 (MSVEPPPELEEKAASEPEAGAMPEK) are disordered. Topologically, residues 1–49 (MSVEPPPELEEKAASEPEAGAMPEKRAGAQAAGSTWLQGFGRPSVYHAA) are extracellular. Residues 50-70 (IVIFLEFFAWGLLTTPMLTVL) form a helical membrane-spanning segment. Topologically, residues 71 to 82 (HETFSQHTFLMN) are cytoplasmic. Residues 83 to 103 (GLIQGVKGLLSFLSAPLIGAL) traverse the membrane as a helical segment. Over 104-111 (SDVWGRKP) the chain is Extracellular. Residues 112–132 (FLLGTVFFTCFPIPLMRISPW) form a helical membrane-spanning segment. Over 133-134 (WY) the chain is Cytoplasmic. The helical transmembrane segment at 135 to 155 (FAMISVSGVFSVTFSVIFAYV) threads the bilayer. Residues 156–168 (ADVTQEHERSTAY) lie on the Extracellular side of the membrane. The chain crosses the membrane as a helical span at residues 169 to 189 (GWVSATFAASLVSSPAIGAYL). Over 190–196 (SASYGDS) the chain is Cytoplasmic. The chain crosses the membrane as a helical span at residues 197-217 (LVVLVATVVALLDICFILVAV). Residues 218 to 255 (PESLPEKMRPVSWGAQISWKQADPFASLKKVGKDSTVL) are Extracellular-facing. A helical transmembrane segment spans residues 256–276 (LICITVFLSYLPEAGQYSSFF). Residues 277-281 (LYLRQ) are Cytoplasmic-facing. A helical membrane pass occupies residues 282-302 (VIGFGSVKIAAFIAMVGILSI). The Extracellular segment spans residues 303 to 319 (VAQTAFLSILMRSLGNK). Residues 320–340 (NTVLLGLGFQMLQLAWYGFGS) traverse the membrane as a helical segment. A topological domain (cytoplasmic) is located at residue Gln341. The helical transmembrane segment at 342–362 (AWMMWAAGTVAAMSSITFPAI) threads the bilayer. Residues 363 to 387 (SALVSRNAESDQQGVAQGIITGIRG) are Extracellular-facing. The chain crosses the membrane as a helical span at residues 388 to 408 (LCNGLGPALYGFIFYMFHVEL). Over 409-428 (TELGPKLNSNNVPLQGAVIP) the chain is Cytoplasmic. Residues 429–449 (GPPFLFGACIVLMSFLVALFI) form a helical membrane-spanning segment. Topologically, residues 450-506 (PEYSKASGVQKHSNSSSGSLTNTPERGSDEDIEPLLQDSSIWELSSFEEPGNQCTEL) are extracellular. Residues 457–481 (GVQKHSNSSSGSLTNTPERGSDEDI) form a disordered region. Over residues 459–474 (QKHSNSSSGSLTNTPE) the composition is skewed to polar residues. The N-linked (GlcNAc...) asparagine glycan is linked to Asn463.

It belongs to the major facilitator superfamily.

The protein resides in the membrane. This Homo sapiens (Human) protein is Hippocampus abundant transcript-like protein 1.